The primary structure comprises 389 residues: Meiosis-specific protein MEI4 (389 aa).

Residues 1–127 form an interaction with REC114 region; sequence MDIQPWYLKT…LSQHFVESTD (127 aa).

This sequence belongs to the MEI4L family. In terms of assembly, part of the MCD recombinosome complex, at least composed of IHO1, REC114 and MEI4. Forms a complex with REC114; the interaction is required for MEI4 stability. Interacts (via N-terminal domain) with REC114 (via C-terminal domain). Interacts with IHO1. In terms of tissue distribution, expressed in adult testis and brain and in embryonic ovary.

The protein resides in the chromosome. In terms of biological role, required for DNA double-strand breaks (DSBs) formation in unsynapsed regions during meiotic recombination. Probably acts by forming a complex with IHO1 and REC114, which activates DSBs formation in unsynapsed regions, an essential step to ensure completion of synapsis. This is Meiosis-specific protein MEI4 from Mus musculus (Mouse).